Here is a 316-residue protein sequence, read N- to C-terminus: MLGFTEGIFLVLTVTEFILGNLVNGFIVSVNGSHWFKSKKISLSDFIITSLALFRIFLLWIIFTDSLIIVFSYHTHDSGIRMQLIDVFWTFTNHFSIWLISCLSVFYCLKIATFSHPSFLWLKWRASRVVVGMLWGALVLSCVCTMSLMNEFKIYSALTGSRDTQNMTEYIRLKRHEYNLMHVLGNLWKIPSLIVSLIAYFLLLLSLGKHTQQMQKYSVGSRDQSAEAHRRAMRIILSFLLFFLFYFLSFVILSSSRFLPETKIARIIGVVITMSYLVGDSLILILGNNKLKQTFVAILPCECGHPKPGSKRFFAS.

Residues 1 to 7 are Extracellular-facing; sequence MLGFTEG. A helical transmembrane segment spans residues 8–28; sequence IFLVLTVTEFILGNLVNGFIV. Residues 29–50 are Cytoplasmic-facing; it reads SVNGSHWFKSKKISLSDFIITS. A helical transmembrane segment spans residues 51-71; sequence LALFRIFLLWIIFTDSLIIVF. Residues 72 to 86 lie on the Extracellular side of the membrane; sequence SYHTHDSGIRMQLID. Residues 87–107 form a helical membrane-spanning segment; it reads VFWTFTNHFSIWLISCLSVFY. Topologically, residues 108-128 are cytoplasmic; the sequence is CLKIATFSHPSFLWLKWRASR. A helical membrane pass occupies residues 129-149; that stretch reads VVVGMLWGALVLSCVCTMSLM. At 150–186 the chain is on the extracellular side; the sequence is NEFKIYSALTGSRDTQNMTEYIRLKRHEYNLMHVLGN. The N-linked (GlcNAc...) asparagine glycan is linked to N166. Residues 187 to 207 traverse the membrane as a helical segment; the sequence is LWKIPSLIVSLIAYFLLLLSL. Over 208–234 the chain is Cytoplasmic; it reads GKHTQQMQKYSVGSRDQSAEAHRRAMR. A helical membrane pass occupies residues 235–255; it reads IILSFLLFFLFYFLSFVILSS. Residues 256–266 are Extracellular-facing; the sequence is SRFLPETKIAR. Residues 267–287 traverse the membrane as a helical segment; that stretch reads IIGVVITMSYLVGDSLILILG. Over 288–316 the chain is Cytoplasmic; it reads NNKLKQTFVAILPCECGHPKPGSKRFFAS.

The protein belongs to the G-protein coupled receptor T2R family.

It is found in the membrane. In terms of biological role, gustducin-coupled receptor implicated in the perception of bitter compounds in the oral cavity and the gastrointestinal tract. Signals through PLCB2 and the calcium-regulated cation channel TRPM5. This is Taste receptor type 2 member 3 from Rattus norvegicus (Rat).